Reading from the N-terminus, the 303-residue chain is uncharacterized protein (303 aa).

This is an uncharacterized protein from Rickettsia prowazekii (strain Madrid E).